Here is a 370-residue protein sequence, read N- to C-terminus: Chorismate synthase (370 aa).

Arginine 48 contributes to the NADP(+) binding site. FMN is bound by residues 125 to 127 (RSS), 241 to 242 (NA), glycine 285, 300 to 304 (KPTSS), and arginine 326.

Belongs to the chorismate synthase family. As to quaternary structure, homotetramer. It depends on FMNH2 as a cofactor.

It carries out the reaction 5-O-(1-carboxyvinyl)-3-phosphoshikimate = chorismate + phosphate. It participates in metabolic intermediate biosynthesis; chorismate biosynthesis; chorismate from D-erythrose 4-phosphate and phosphoenolpyruvate: step 7/7. Functionally, catalyzes the anti-1,4-elimination of the C-3 phosphate and the C-6 proR hydrogen from 5-enolpyruvylshikimate-3-phosphate (EPSP) to yield chorismate, which is the branch point compound that serves as the starting substrate for the three terminal pathways of aromatic amino acid biosynthesis. This reaction introduces a second double bond into the aromatic ring system. This chain is Chorismate synthase, found in Jannaschia sp. (strain CCS1).